The following is a 61-amino-acid chain: Insect toxin BsIT2 (61 aa).

The LCN-type CS-alpha/beta domain maps to Asp1–Lys61. 4 disulfide bridges follow: Cys10–Cys60, Cys14–Cys35, Cys21–Cys42, and Cys25–Cys44.

This sequence belongs to the long (4 C-C) scorpion toxin superfamily. Sodium channel inhibitor family. Beta subfamily. In terms of tissue distribution, expressed by the venom gland.

It localises to the secreted. Depressant insect beta-toxins cause a transient contraction paralysis followed by a slow flaccid paralysis. They bind voltage-independently at site-4 of sodium channels (Nav) and shift the voltage of activation toward more negative potentials thereby affecting sodium channel activation and promoting spontaneous and repetitive firing. This toxin is active only on insects. The sequence is that of Insect toxin BsIT2 from Hottentotta tamulus sindicus (Scorpion).